Reading from the N-terminus, the 122-residue chain is MYLKKHYKNLITHEIEEEFKKNDIPILDIGDSIKMSILIHEGNKQRIQNVEGVIIAKHKSQLSTTITVRKIVQNIGVERIYLIHSPLIKNIKIVRKAKVRRAKLYYLRLRSGKATRLKTKFN.

The protein belongs to the bacterial ribosomal protein bL19 family.

The protein localises to the plastid. It localises to the chloroplast. In Gracilaria tenuistipitata var. liui (Red alga), this protein is Large ribosomal subunit protein bL19c.